The sequence spans 376 residues: Pre-mRNA-splicing factor cwf25 (376 aa).

Residues 25–60 adopt a coiled-coil conformation; it reads KDEQAHKEEMKRVEQLRREIEEERQLLELHRLQEAA. 2 disordered regions span residues 153 to 211 and 258 to 289; these read LMEK…DRNN and RTSR…ITQR. The span at 154–167 shows a compositional bias: basic and acidic residues; that stretch reads MEKRKYSLDSDRKS. Positions 168–178 are enriched in basic residues; the sequence is KERRHRDRHHR. Basic and acidic residues predominate over residues 179–199; sequence SNQDRSRERSDNEQHSSDKRE. Residues Ser266 and Ser268 each carry the phosphoserine modification. A coiled-coil region spans residues 286-334; sequence ITQRHTDIESRLQKMQDNAKELDESRRKKIELLEKKERDEEQFLEKERR.

This sequence belongs to the CWC25 family. As to quaternary structure, belongs to the 40S cdc5-associated complex (or cwf complex), a spliceosome sub-complex reminiscent of a late-stage spliceosome composed of the U2, U5 and U6 snRNAs and at least brr2, cdc5, cwf2/prp3, cwf3/syf1, cwf4/syf3, cwf5/ecm2, spp42/cwf6, cwf7/spf27, cwf8, cwf9, cwf10, cwf11, cwf12, prp45/cwf13, cwf14, cwf15, cwf16, cwf17, cwf18, cwf19, cwf20, cwf21, cwf22, cwf23, cwf24, cwf25, cwf26, cyp7/cwf27, cwf28, cwf29/ist3, lea1, msl1, prp5/cwf1, prp10, prp12/sap130, prp17, prp22, sap61, sap62, sap114, sap145, slu7, smb1, smd1, smd3, smf1, smg1 and syf2.

The protein resides in the nucleus. Functionally, involved in mRNA splicing. This Schizosaccharomyces pombe (strain 972 / ATCC 24843) (Fission yeast) protein is Pre-mRNA-splicing factor cwf25 (cwf25).